Consider the following 383-residue polypeptide: F-box/kelch-repeat protein At4g19330 (383 aa).

The interval Met1 to Ser27 is disordered. One can recognise an F-box domain in the interval Pro28–Thr79. 3 Kelch repeats span residues Glu147 to Gly192, Lys193 to Thr239, and Ser272 to Gly318.

Its function is as follows. Involved in seed germination. This chain is F-box/kelch-repeat protein At4g19330, found in Arabidopsis thaliana (Mouse-ear cress).